A 145-amino-acid polypeptide reads, in one-letter code: 3-hydroxyacyl-[acyl-carrier-protein] dehydratase FabZ (145 aa).

The active site involves H51.

This sequence belongs to the thioester dehydratase family. FabZ subfamily.

The protein localises to the cytoplasm. The enzyme catalyses a (3R)-hydroxyacyl-[ACP] = a (2E)-enoyl-[ACP] + H2O. Its function is as follows. Involved in unsaturated fatty acids biosynthesis. Catalyzes the dehydration of short chain beta-hydroxyacyl-ACPs and long chain saturated and unsaturated beta-hydroxyacyl-ACPs. This is 3-hydroxyacyl-[acyl-carrier-protein] dehydratase FabZ from Staphylococcus haemolyticus (strain JCSC1435).